Here is an 84-residue protein sequence, read N- to C-terminus: Large ribosomal subunit protein bL27 (84 aa).

The tract at residues 1–21 (MATKKAGGSSRNGRDSAGRRL) is disordered.

The protein belongs to the bacterial ribosomal protein bL27 family.

This is Large ribosomal subunit protein bL27 from Pelagibacter ubique (strain HTCC1062).